A 217-amino-acid chain; its full sequence is Adenylate kinase (217 aa).

10–15 (GAGKGT) serves as a coordination point for ATP. An NMP region spans residues 30–59 (STGDMFRAAMKEETQLGLEAKSFIDKGELV). AMP-binding positions include Thr-31, Arg-36, 57-59 (ELV), 85-88 (GFPR), and Gln-92. Residues 126–163 (GRRICKNCGATYHLVFNPPAKENVCDKCGGELYQRADD) are LID. Residue Arg-127 participates in ATP binding. Zn(2+)-binding residues include Cys-130 and Cys-133. 136-137 (TY) serves as a coordination point for ATP. Zn(2+)-binding residues include Cys-150 and Cys-153. Residues Arg-160 and Arg-171 each contribute to the AMP site. ATP is bound at residue Lys-199.

The protein belongs to the adenylate kinase family. As to quaternary structure, monomer.

The protein localises to the cytoplasm. The enzyme catalyses AMP + ATP = 2 ADP. Its pathway is purine metabolism; AMP biosynthesis via salvage pathway; AMP from ADP: step 1/1. Functionally, catalyzes the reversible transfer of the terminal phosphate group between ATP and AMP. Plays an important role in cellular energy homeostasis and in adenine nucleotide metabolism. The chain is Adenylate kinase from Bacillus pumilus (strain SAFR-032).